Here is a 133-residue protein sequence, read N- to C-terminus: Large ribosomal subunit protein uL22c (133 aa).

Belongs to the universal ribosomal protein uL22 family. Part of the 50S ribosomal subunit.

Its subcellular location is the plastid. It is found in the chloroplast. Functionally, this protein binds specifically to 23S rRNA. In terms of biological role, the globular domain of the protein is located near the polypeptide exit tunnel on the outside of the subunit, while an extended beta-hairpin is found that lines the wall of the exit tunnel in the center of the 70S ribosome. In Manihot esculenta (Cassava), this protein is Large ribosomal subunit protein uL22c (rpl22).